We begin with the raw amino-acid sequence, 395 residues long: Chorismate synthase (395 aa).

Arg-40 and Arg-46 together coordinate NADP(+). The interval 99-120 (PREGRNAPLSRPRPGHADLTGM) is disordered. FMN contacts are provided by residues 134 to 136 (RSS), 256 to 257 (QA), Gly-301, 316 to 320 (KPIPS), and Arg-342.

This sequence belongs to the chorismate synthase family. As to quaternary structure, homotetramer. FMNH2 is required as a cofactor.

It catalyses the reaction 5-O-(1-carboxyvinyl)-3-phosphoshikimate = chorismate + phosphate. Its pathway is metabolic intermediate biosynthesis; chorismate biosynthesis; chorismate from D-erythrose 4-phosphate and phosphoenolpyruvate: step 7/7. Catalyzes the anti-1,4-elimination of the C-3 phosphate and the C-6 proR hydrogen from 5-enolpyruvylshikimate-3-phosphate (EPSP) to yield chorismate, which is the branch point compound that serves as the starting substrate for the three terminal pathways of aromatic amino acid biosynthesis. This reaction introduces a second double bond into the aromatic ring system. In Bifidobacterium longum (strain DJO10A), this protein is Chorismate synthase.